The chain runs to 343 residues: Thiamine-phosphate synthase (343 aa).

The unknown stretch occupies residues 1 to 123; sequence MQQASPTAIA…GACCKQLRYR (123 aa). The thiamine-phosphate synthase stretch occupies residues 124 to 343; sequence VYALESGLLG…LLTQLSRINP (220 aa). Residues 171-175 and Asn203 contribute to the 4-amino-2-methyl-5-(diphosphooxymethyl)pyrimidine site; that span reads QYRDK. Positions 204 and 223 each coordinate Mg(2+). Residue Ser242 participates in 4-amino-2-methyl-5-(diphosphooxymethyl)pyrimidine binding. 268-270 contacts 2-[(2R,5Z)-2-carboxy-4-methylthiazol-5(2H)-ylidene]ethyl phosphate; the sequence is TPT. Residue Lys271 participates in 4-amino-2-methyl-5-(diphosphooxymethyl)pyrimidine binding. Gly298 lines the 2-[(2R,5Z)-2-carboxy-4-methylthiazol-5(2H)-ylidene]ethyl phosphate pocket.

It belongs to the thiamine-phosphate synthase family. Mg(2+) is required as a cofactor.

The catalysed reaction is 2-[(2R,5Z)-2-carboxy-4-methylthiazol-5(2H)-ylidene]ethyl phosphate + 4-amino-2-methyl-5-(diphosphooxymethyl)pyrimidine + 2 H(+) = thiamine phosphate + CO2 + diphosphate. The enzyme catalyses 2-(2-carboxy-4-methylthiazol-5-yl)ethyl phosphate + 4-amino-2-methyl-5-(diphosphooxymethyl)pyrimidine + 2 H(+) = thiamine phosphate + CO2 + diphosphate. It catalyses the reaction 4-methyl-5-(2-phosphooxyethyl)-thiazole + 4-amino-2-methyl-5-(diphosphooxymethyl)pyrimidine + H(+) = thiamine phosphate + diphosphate. It participates in cofactor biosynthesis; thiamine diphosphate biosynthesis; thiamine phosphate from 4-amino-2-methyl-5-diphosphomethylpyrimidine and 4-methyl-5-(2-phosphoethyl)-thiazole: step 1/1. Condenses 4-methyl-5-(beta-hydroxyethyl)thiazole monophosphate (THZ-P) and 2-methyl-4-amino-5-hydroxymethyl pyrimidine pyrophosphate (HMP-PP) to form thiamine monophosphate (TMP). The polypeptide is Thiamine-phosphate synthase (Synechocystis sp. (strain ATCC 27184 / PCC 6803 / Kazusa)).